Here is a 180-residue protein sequence, read N- to C-terminus: Ribosome maturation factor RimM (180 aa).

A PRC barrel domain is found at 104–177 (EGEFHLLDLV…WLLLTPPPGL (74 aa)).

Belongs to the RimM family. In terms of assembly, binds ribosomal protein uS19.

The protein localises to the cytoplasm. In terms of biological role, an accessory protein needed during the final step in the assembly of 30S ribosomal subunit, possibly for assembly of the head region. Essential for efficient processing of 16S rRNA. May be needed both before and after RbfA during the maturation of 16S rRNA. It has affinity for free ribosomal 30S subunits but not for 70S ribosomes. The polypeptide is Ribosome maturation factor RimM (Synechococcus sp. (strain CC9902)).